The chain runs to 149 residues: Glycophorin-A (149 aa).

The signal sequence occupies residues 1-19; the sequence is MYGKIIFVLLLSAIVSISA. At 20 to 90 the chain is on the extracellular side; the sequence is SSTTEVAMHT…QLVHRFSEPE (71 aa). Residue Ser21 is glycosylated (O-linked (GalNAc...) serine). Residues Thr22, Thr23, and Thr29 are each glycosylated (O-linked (GalNAc...) threonine). O-linked (GalNAc...) serine glycosylation occurs at Ser30. Thr31 carries O-linked (GalNAc...) threonine glycosylation. O-linked (GalNAc...) serine glycosylation is present at Ser32. Thr35 is a glycosylation site (O-linked (GalNAc...) threonine). 2 O-linked (GalNAc...) serine glycosylation sites follow: Ser37 and Ser40. Thr43 is a glycosylation site (O-linked (GalNAc...) threonine). Ser44 carries an O-linked (GalNAc...) serine glycan. Thr51 and Thr55 each carry an O-linked (GalNAc...) threonine glycan. Ser62 carries an O-linked (GalNAc...) serine glycan. A glycan (O-linked (GalNAc...) threonine) is linked at Thr68. The chain crosses the membrane as a helical span at residues 91–113; that stretch reads ITLIIFGVMAGVIGTILLIYYSI. At 114-149 the chain is on the cytoplasmic side; that stretch reads RRLIKKSPSDVKPLPSPDTDVPLSSVEIENPETSDQ. Positions 122-149 are disordered; the sequence is SDVKPLPSPDTDVPLSSVEIENPETSDQ. A phosphoserine mark is found at Ser137 and Ser147.

The protein belongs to the glycophorin-A family. In terms of assembly, homodimer. Component of the ankyrin-1 complex in the erythrocyte, composed of ANK1, RHCE, RHAG, SLC4A1, EPB42, GYPA, GYPB and AQP1. Interacts with SLC4A1; a GYPA monomer is bound at each end of the SLC4A1 dimer forming a heterotetramer.

The protein resides in the cell membrane. Its function is as follows. Component of the ankyrin-1 complex, a multiprotein complex involved in the stability and shape of the erythrocyte membrane. Glycophorin A is the major intrinsic membrane protein of the erythrocyte. The N-terminal glycosylated segment, which lies outside the erythrocyte membrane, has MN blood group receptors. Appears to be important for the function of SLC4A1 and is required for high activity of SLC4A1. May be involved in translocation of SLC4A1 to the plasma membrane. This chain is Glycophorin-A, found in Pan troglodytes (Chimpanzee).